We begin with the raw amino-acid sequence, 416 residues long: Nuclear hormone receptor family member nhr-67 (416 aa).

Residues 18–98 constitute a DNA-binding region (nuclear receptor); sequence DVDCRVCEDH…IGMNKDAVQH (81 aa). NR C4-type zinc fingers lie at residues 21–41 and 57–86; these read CRVC…CDGC and CKNK…LRKC. Residues 331–398 are disordered; the sequence is KTETEEGEDI…SSRPRHSIRS (68 aa). Acidic residues predominate over residues 335–346; it reads EEGEDIEEEDDA. The segment covering 377–390 has biased composition (low complexity); the sequence is SSTQPSSASSPSSS.

It belongs to the nuclear hormone receptor family. As to expression, expressed in linker cell.

It localises to the nucleus. Functionally, orphan nuclear receptor that binds DNA containing an extended core motif half-site sequence 5'-AAGTCA-3'. In males, plays an essential role in the migration of the linker cell which guides gonad elongation during the L3 and L4 stages of larval development by negatively regulating the expression of netrin receptor unc-5 at the mid-L3 stage. Involved in the regulation of non-apoptotic cell death in the linker cell, acting upstream of or in parallel to transcription factor hsf-1. Represses hypoxia response genes, fmo-2 and acs-2, in both normoxic and hypoxic conditions, probably acting via repression of nuclear receptor nhr-49. The sequence is that of Nuclear hormone receptor family member nhr-67 (nhr-67) from Caenorhabditis elegans.